Consider the following 233-residue polypeptide: Defense protein 3 (233 aa).

Positions 1 to 17 are cleaved as a signal peptide; it reads MFGKFVLLAVLLVGVNS. The propeptide occupies 18-45; that stretch reads RYVIIEDPVYYIEDHELPEQWTSSRVRR.

Belongs to the attacin/sarcotoxin-2 family.

It is found in the secreted. Its function is as follows. Has antibacterial activity against both Gram-positive and Gram-negative bacteria. The protein is Defense protein 3 of Lonomia obliqua (Moth).